The following is a 397-amino-acid chain: CCA-adding enzyme (397 aa).

Residues Gly26 and Arg29 each coordinate ATP. 2 residues coordinate CTP: Gly26 and Arg29. Residues Asp39 and Asp41 each contribute to the Mg(2+) site. 5 residues coordinate ATP: Arg110, Asp153, Arg156, Arg159, and Arg162. 5 residues coordinate CTP: Arg110, Asp153, Arg156, Arg159, and Arg162.

It belongs to the tRNA nucleotidyltransferase/poly(A) polymerase family. Bacterial CCA-adding enzyme type 3 subfamily. In terms of assembly, homodimer. The cofactor is Mg(2+).

The enzyme catalyses a tRNA precursor + 2 CTP + ATP = a tRNA with a 3' CCA end + 3 diphosphate. The catalysed reaction is a tRNA with a 3' CCA end + 2 CTP + ATP = a tRNA with a 3' CCACCA end + 3 diphosphate. Functionally, catalyzes the addition and repair of the essential 3'-terminal CCA sequence in tRNAs without using a nucleic acid template. Adds these three nucleotides in the order of C, C, and A to the tRNA nucleotide-73, using CTP and ATP as substrates and producing inorganic pyrophosphate. tRNA 3'-terminal CCA addition is required both for tRNA processing and repair. Also involved in tRNA surveillance by mediating tandem CCA addition to generate a CCACCA at the 3' terminus of unstable tRNAs. While stable tRNAs receive only 3'-terminal CCA, unstable tRNAs are marked with CCACCA and rapidly degraded. This chain is CCA-adding enzyme, found in Bacillus cereus (strain ZK / E33L).